A 210-amino-acid chain; its full sequence is Large ribosomal subunit protein uL3 (210 aa).

The tract at residues 126–167 (WGFQRGPSGHGSKNIREPGSTGNATFPGRVIKGKKMPGQKGN) is disordered. Basic residues predominate over residues 156–167 (IKGKKMPGQKGN).

Belongs to the universal ribosomal protein uL3 family. In terms of assembly, part of the 50S ribosomal subunit. Forms a cluster with proteins L14 and L19.

Its function is as follows. One of the primary rRNA binding proteins, it binds directly near the 3'-end of the 23S rRNA, where it nucleates assembly of the 50S subunit. This is Large ribosomal subunit protein uL3 from Syntrophobacter fumaroxidans (strain DSM 10017 / MPOB).